A 234-amino-acid polypeptide reads, in one-letter code: Adenosine 5'-phosphosulfate reductase (234 aa).

The [4Fe-4S] cluster site is built by Cys120, Cys121, Cys203, and Cys206. The active-site Nucleophile; cysteine thiosulfonate intermediate is the Cys229.

Belongs to the PAPS reductase family. CysH subfamily. Requires [4Fe-4S] cluster as cofactor.

The protein localises to the cytoplasm. It carries out the reaction [thioredoxin]-disulfide + sulfite + AMP + 2 H(+) = adenosine 5'-phosphosulfate + [thioredoxin]-dithiol. It participates in sulfur metabolism; hydrogen sulfide biosynthesis; sulfite from sulfate. In terms of biological role, catalyzes the formation of sulfite from adenosine 5'-phosphosulfate (APS) using thioredoxin as an electron donor. The polypeptide is Adenosine 5'-phosphosulfate reductase (Bacillus cereus (strain 03BB102)).